Reading from the N-terminus, the 269-residue chain is Ribosomal RNA small subunit methyltransferase A (269 aa).

Positions 17, 42, 64, 89, and 109 each coordinate S-adenosyl-L-methionine.

Belongs to the class I-like SAM-binding methyltransferase superfamily. rRNA adenine N(6)-methyltransferase family. RsmA subfamily.

The protein localises to the cytoplasm. The catalysed reaction is adenosine(1518)/adenosine(1519) in 16S rRNA + 4 S-adenosyl-L-methionine = N(6)-dimethyladenosine(1518)/N(6)-dimethyladenosine(1519) in 16S rRNA + 4 S-adenosyl-L-homocysteine + 4 H(+). Specifically dimethylates two adjacent adenosines (A1518 and A1519) in the loop of a conserved hairpin near the 3'-end of 16S rRNA in the 30S particle. May play a critical role in biogenesis of 30S subunits. This is Ribosomal RNA small subunit methyltransferase A from Anaplasma phagocytophilum (strain HZ).